The chain runs to 180 residues: Pro-glucagon (180 aa).

An N-terminal signal peptide occupies residues 1–20 (MKSIYFVAGLFVMLVQGSWQ). A disordered region spans residues 26–59 (TEEKSRSFSASQADPLSDPDQMNEDKRHSQGTFT). Ser54 is modified (phosphoserine). A propeptide spanning residues 84–89 (NRNNIA) is cleaved from the precursor. 2 positions are modified to phosphoserine: Ser105 and Ser108. Position 127 is an arginine amide (Arg127). Positions 131-145 (DFPEEVAIVEELGRR) are excised as a propeptide. Phosphoserine occurs at positions 150 and 152.

It belongs to the glucagon family. Post-translationally, proglucagon is post-translationally processed in a tissue-specific manner in pancreatic A cells and intestinal L cells. In pancreatic A cells, the major bioactive hormone is glucagon cleaved by PCSK2/PC2. In the intestinal L cells PCSK1/PC1 liberates GLP-1, GLP-2, glicentin and oxyntomodulin. GLP-1 is further N-terminally truncated by post-translational processing in the intestinal L cells resulting in GLP-1(7-37) GLP-1-(7-36)amide. The C-terminal amidation is neither important for the metabolism of GLP-1 nor for its effects on the endocrine pancreas. In terms of tissue distribution, secreted in the A cells of the islets of Langerhans. Secreted in the A cells of the islets of Langerhans. Secreted from enteroendocrine L cells throughout the gastrointestinal tract. Also secreted in selected neurons in the brain. As to expression, secreted from enteroendocrine cells throughout the gastrointestinal tract. Also secreted in selected neurons in the brain. In terms of tissue distribution, secreted from enteroendocrine cells throughout the gastrointestinal tract.

The protein resides in the secreted. In terms of biological role, plays a key role in glucose metabolism and homeostasis. Regulates blood glucose by increasing gluconeogenesis and decreasing glycolysis. A counterregulatory hormone of insulin, raises plasma glucose levels in response to insulin-induced hypoglycemia. Plays an important role in initiating and maintaining hyperglycemic conditions in diabetes. Potent stimulator of glucose-dependent insulin release. Also stimulates insulin release in response to IL6. Plays important roles on gastric motility and the suppression of plasma glucagon levels. May be involved in the suppression of satiety and stimulation of glucose disposal in peripheral tissues, independent of the actions of insulin. Has growth-promoting activities on intestinal epithelium. May also regulate the hypothalamic pituitary axis (HPA) via effects on LH, TSH, CRH, oxytocin, and vasopressin secretion. Increases islet mass through stimulation of islet neogenesis and pancreatic beta cell proliferation. Inhibits beta cell apoptosis. Functionally, stimulates intestinal growth and up-regulates villus height in the small intestine, concomitant with increased crypt cell proliferation and decreased enterocyte apoptosis. The gastrointestinal tract, from the stomach to the colon is the principal target for GLP-2 action. Plays a key role in nutrient homeostasis, enhancing nutrient assimilation through enhanced gastrointestinal function, as well as increasing nutrient disposal. Stimulates intestinal glucose transport and decreases mucosal permeability. Its function is as follows. Significantly reduces food intake. Inhibits gastric emptying in humans. Suppression of gastric emptying may lead to increased gastric distension, which may contribute to satiety by causing a sensation of fullness. In terms of biological role, may modulate gastric acid secretion and the gastro-pyloro-duodenal activity. May play an important role in intestinal mucosal growth in the early period of life. This is Pro-glucagon from Homo sapiens (Human).